Reading from the N-terminus, the 256-residue chain is Imidazole glycerol phosphate synthase subunit HisF (256 aa).

Active-site residues include Asp12 and Asp131.

This sequence belongs to the HisA/HisF family. In terms of assembly, heterodimer of HisH and HisF.

The protein resides in the cytoplasm. The enzyme catalyses 5-[(5-phospho-1-deoxy-D-ribulos-1-ylimino)methylamino]-1-(5-phospho-beta-D-ribosyl)imidazole-4-carboxamide + L-glutamine = D-erythro-1-(imidazol-4-yl)glycerol 3-phosphate + 5-amino-1-(5-phospho-beta-D-ribosyl)imidazole-4-carboxamide + L-glutamate + H(+). It participates in amino-acid biosynthesis; L-histidine biosynthesis; L-histidine from 5-phospho-alpha-D-ribose 1-diphosphate: step 5/9. In terms of biological role, IGPS catalyzes the conversion of PRFAR and glutamine to IGP, AICAR and glutamate. The HisF subunit catalyzes the cyclization activity that produces IGP and AICAR from PRFAR using the ammonia provided by the HisH subunit. This chain is Imidazole glycerol phosphate synthase subunit HisF, found in Pseudomonas putida (strain GB-1).